We begin with the raw amino-acid sequence, 147 residues long: Hemoglobin subunit epsilon (147 aa).

In terms of domain architecture, Globin spans 3-147 (HFTAEEKAAI…VAIALGHKYH (145 aa)). Residues S14 and S51 each carry the phosphoserine modification. H64 and H93 together coordinate heme b.

This sequence belongs to the globin family. Heterotetramer of two alpha chains and two epsilon chains in early embryonic hemoglobin Gower-2; two zeta chains and two epsilon chains in early embryonic hemoglobin Gower-1. Red blood cells.

The epsilon chain is a beta-type chain of early mammalian embryonic hemoglobin. This Callithrix jacchus (White-tufted-ear marmoset) protein is Hemoglobin subunit epsilon (HBE1).